An 883-amino-acid polypeptide reads, in one-letter code: DNA mismatch repair protein MutS (883 aa).

An ATP-binding site is contributed by 602–609 (GPNMSGKS).

The protein belongs to the DNA mismatch repair MutS family.

In terms of biological role, this protein is involved in the repair of mismatches in DNA. It is possible that it carries out the mismatch recognition step. This protein has a weak ATPase activity. In Staphylococcus haemolyticus (strain JCSC1435), this protein is DNA mismatch repair protein MutS.